We begin with the raw amino-acid sequence, 100 residues long: Small ribosomal subunit protein uS14 (100 aa).

It belongs to the universal ribosomal protein uS14 family. Part of the 30S ribosomal subunit. Contacts proteins S3 and S10.

In terms of biological role, binds 16S rRNA, required for the assembly of 30S particles and may also be responsible for determining the conformation of the 16S rRNA at the A site. The protein is Small ribosomal subunit protein uS14 of Synechococcus sp. (strain CC9311).